A 273-amino-acid polypeptide reads, in one-letter code: Homeobox protein HMX2 (273 aa).

The interval 1 to 154 (MGSKEDVGKG…TGAAKKKTRT (154 aa)) is disordered. The span at 114 to 123 (PDFKEEKERL) shows a compositional bias: basic and acidic residues. Positions 149–208 (KKKTRTVFSRSQVYQLESTFDMKRYLSSSERACLASSLQLTETQVKTWFQNRRNKWKRQL) form a DNA-binding region, homeobox.

It belongs to the HMX homeobox family. In terms of tissue distribution, expressed in the developing CNS, including a specific expression in vestibular structures throughout inner ear development.

Its subcellular location is the nucleus. Its function is as follows. Transcription factor involved in specification of neuronal cell types and which is required for inner ear and hypothalamus development. This chain is Homeobox protein HMX2 (Hmx2), found in Mus musculus (Mouse).